A 511-amino-acid polypeptide reads, in one-letter code: 2-isopropylmalate synthase (511 aa).

The region spanning 6 to 269 (IIIFDTTLRD…YTDIKCENIF (264 aa)) is the Pyruvate carboxyltransferase domain. Mn(2+)-binding residues include Asp15, His203, His205, and Asn239. The interval 394 to 511 (VIEKLSVISG…SLKVEERKMA (118 aa)) is regulatory domain.

It belongs to the alpha-IPM synthase/homocitrate synthase family. LeuA type 1 subfamily. As to quaternary structure, homodimer. Requires Mn(2+) as cofactor.

It localises to the cytoplasm. It catalyses the reaction 3-methyl-2-oxobutanoate + acetyl-CoA + H2O = (2S)-2-isopropylmalate + CoA + H(+). It participates in amino-acid biosynthesis; L-leucine biosynthesis; L-leucine from 3-methyl-2-oxobutanoate: step 1/4. Its function is as follows. Catalyzes the condensation of the acetyl group of acetyl-CoA with 3-methyl-2-oxobutanoate (2-ketoisovalerate) to form 3-carboxy-3-hydroxy-4-methylpentanoate (2-isopropylmalate). The chain is 2-isopropylmalate synthase from Campylobacter jejuni (strain RM1221).